The following is a 225-amino-acid chain: Membrane protein (225 aa).

At 1 to 20 the chain is on the virion surface side; it reads MSNETNCTLDFEQSVELFKE. A helical membrane pass occupies residues 21 to 41; sequence YNLFITAFLLFLTIILQYGYA. At 42–51 the chain is on the intravirion side; the sequence is TRSKFIYILK. A helical transmembrane segment spans residues 52–72; the sequence is MIVLWCFWPLNIAVGVISCIY. Topologically, residues 73 to 77 are virion surface; it reads PPNTG. Residues 78–98 traverse the membrane as a helical segment; the sequence is GLVAAIILTVFACLSFVGYWI. At 99–225 the chain is on the intravirion side; it reads QSIRLFKRCR…VATGGSSLYT (127 aa).

This sequence belongs to the gammacoronaviruses M protein family. As to quaternary structure, homomultimer. Interacts with envelope E protein in the budding compartment of the host cell, which is located between endoplasmic reticulum and the Golgi complex. Forms a complex with HE and S proteins. Interacts with nucleocapsid N protein. This interaction probably participates in RNA packaging into the virus.

Its subcellular location is the virion membrane. The protein resides in the host Golgi apparatus membrane. Component of the viral envelope that plays a central role in virus morphogenesis and assembly via its interactions with other viral proteins. This is Membrane protein from Gallus gallus (Chicken).